The primary structure comprises 304 residues: Non-specific ribonucleoside hydrolase RihC (304 aa).

The active site involves His233.

It belongs to the IUNH family. RihC subfamily.

In terms of biological role, hydrolyzes both purine and pyrimidine ribonucleosides with a broad-substrate specificity. The polypeptide is Non-specific ribonucleoside hydrolase RihC (Escherichia coli O17:K52:H18 (strain UMN026 / ExPEC)).